The chain runs to 1588 residues: Pentafunctional AROM polypeptide (1588 aa).

Positions 1 to 392 (MVQLAKVPIL…YGDSAQFVSD (392 aa)) are 3-dehydroquinate synthase. Residues 43 to 45 (DTN), 78 to 81 (ETSK), 109 to 111 (GGV), and Asp-114 each bind NAD(+). A 7-phospho-2-dehydro-3-deoxy-D-arabino-heptonate-binding site is contributed by Arg-125. Position 134–135 (134–135 (TS)) interacts with NAD(+). 7-phospho-2-dehydro-3-deoxy-D-arabino-heptonate-binding residues include Asp-141 and Lys-147. Lys-156 is an NAD(+) binding site. Asn-157 provides a ligand contact to 7-phospho-2-dehydro-3-deoxy-D-arabino-heptonate. Residues 174–177 (WLET) and Asn-185 each bind NAD(+). Glu-189 contacts Zn(2+). 7-phospho-2-dehydro-3-deoxy-D-arabino-heptonate is bound by residues 189–192 (EVIK) and Lys-258. The Proton acceptor; for 3-dehydroquinate synthase activity role is filled by Glu-268. Residues 272–276 (RNLLN) and His-279 contribute to the 7-phospho-2-dehydro-3-deoxy-D-arabino-heptonate site. Position 279 (His-279) interacts with Zn(2+). The Proton acceptor; for 3-dehydroquinate synthase activity role is filled by His-283. His-295 and Lys-364 together coordinate 7-phospho-2-dehydro-3-deoxy-D-arabino-heptonate. A Zn(2+)-binding site is contributed by His-295. An EPSP synthase region spans residues 405–871 (VYPFKDIPAD…WDVLHSELGA (467 aa)). Cys-853 functions as the For EPSP synthase activity in the catalytic mechanism. The shikimate kinase stretch occupies residues 890 to 1080 (SVVIIGMRAA…IPSGRSAFVC (191 aa)). 895-902 (GMRAAGKT) contacts ATP. The tract at residues 1081-1293 (LTFDDLTEQT…AAPGQLTVAQ (213 aa)) is 3-dehydroquinase. His-1198 acts as the Proton acceptor; for 3-dehydroquinate dehydratase activity in catalysis. Lys-1227 functions as the Schiff-base intermediate with substrate; for 3-dehydroquinate dehydratase activity in the catalytic mechanism. Positions 1306–1588 (PKELFVVGKP…KAIFDAVTKE (283 aa)) are shikimate dehydrogenase.

The protein in the N-terminal section; belongs to the sugar phosphate cyclases superfamily. Dehydroquinate synthase family. In the 2nd section; belongs to the EPSP synthase family. It in the 3rd section; belongs to the shikimate kinase family. This sequence in the 4th section; belongs to the type-I 3-dehydroquinase family. The protein in the C-terminal section; belongs to the shikimate dehydrogenase family. Homodimer. It depends on Zn(2+) as a cofactor.

The protein localises to the cytoplasm. It catalyses the reaction 7-phospho-2-dehydro-3-deoxy-D-arabino-heptonate = 3-dehydroquinate + phosphate. The catalysed reaction is 3-dehydroquinate = 3-dehydroshikimate + H2O. The enzyme catalyses shikimate + NADP(+) = 3-dehydroshikimate + NADPH + H(+). It carries out the reaction shikimate + ATP = 3-phosphoshikimate + ADP + H(+). It catalyses the reaction 3-phosphoshikimate + phosphoenolpyruvate = 5-O-(1-carboxyvinyl)-3-phosphoshikimate + phosphate. The protein operates within metabolic intermediate biosynthesis; chorismate biosynthesis; chorismate from D-erythrose 4-phosphate and phosphoenolpyruvate: step 2/7. Its pathway is metabolic intermediate biosynthesis; chorismate biosynthesis; chorismate from D-erythrose 4-phosphate and phosphoenolpyruvate: step 3/7. It participates in metabolic intermediate biosynthesis; chorismate biosynthesis; chorismate from D-erythrose 4-phosphate and phosphoenolpyruvate: step 4/7. It functions in the pathway metabolic intermediate biosynthesis; chorismate biosynthesis; chorismate from D-erythrose 4-phosphate and phosphoenolpyruvate: step 5/7. The protein operates within metabolic intermediate biosynthesis; chorismate biosynthesis; chorismate from D-erythrose 4-phosphate and phosphoenolpyruvate: step 6/7. The AROM polypeptide catalyzes 5 consecutive enzymatic reactions in prechorismate polyaromatic amino acid biosynthesis. The chain is Pentafunctional AROM polypeptide from Saccharomyces cerevisiae (strain JAY291) (Baker's yeast).